The sequence spans 76 residues: Putative snRNP Sm-like protein (76 aa).

Residues 4–76 (RPLDVIHKSL…VLAISPVEIE (73 aa)) form the Sm domain.

This sequence belongs to the snRNP Sm proteins family.

The protein is Putative snRNP Sm-like protein of Thermococcus sibiricus (strain DSM 12597 / MM 739).